The sequence spans 290 residues: Syntaxin-2 (290 aa).

The Cytoplasmic portion of the chain corresponds to 1–266 (MRDRLPDLTA…KYQSKARRKK (266 aa)). The residue at position 14 (Ser-14) is a Phosphoserine. Residues 69–106 (EGKIKEELEDLNKEIKKTANRIRGKLKAIEQSCDQDEN) adopt a coiled-coil conformation. The t-SNARE coiled-coil homology domain maps to 193-255 (LNEIESRHKD…EHAKEETKKA (63 aa)). Residues 267–290 (WIIAAVVVAVIAVLALIIGLTVGK) traverse the membrane as a helical; Anchor for type IV membrane protein segment.

This sequence belongs to the syntaxin family. In terms of assembly, interacts with SYT6 and SYT8; the interaction is Ca(2+)-dependent. In terms of tissue distribution, heart, spleen, liver, and testis.

The protein resides in the membrane. In terms of biological role, essential for epithelial morphogenesis. May mediate Ca(2+)-regulation of exocytosis acrosomal reaction in sperm. This is Syntaxin-2 (Stx2) from Rattus norvegicus (Rat).